The chain runs to 545 residues: CTP synthase (545 aa).

The segment at 1–266 is amidoligase domain; it reads MATNYIFVTG…DSFVCDRFRL (266 aa). Serine 14 lines the CTP pocket. Residue serine 14 coordinates UTP. ATP contacts are provided by residues 15–20 and aspartate 72; that span reads SLGKGI. Mg(2+)-binding residues include aspartate 72 and glutamate 140. CTP is bound by residues 147–149, 187–192, and lysine 223; these read DIE and KTKPTQ. UTP is bound by residues 187–192 and lysine 223; that span reads KTKPTQ. 239 to 241 lines the ATP pocket; sequence KDV. The 252-residue stretch at 291–542 folds into the Glutamine amidotransferase type-1 domain; sequence TIGMVGKYVE…VAAAKAYQDS (252 aa). Residue glycine 352 coordinates L-glutamine. The active-site Nucleophile; for glutamine hydrolysis is the cysteine 379. Residues 380 to 383, glutamate 403, and arginine 470 each bind L-glutamine; that span reads LGMQ. Residues histidine 515 and glutamate 517 contribute to the active site.

This sequence belongs to the CTP synthase family. Homotetramer.

The enzyme catalyses UTP + L-glutamine + ATP + H2O = CTP + L-glutamate + ADP + phosphate + 2 H(+). The catalysed reaction is L-glutamine + H2O = L-glutamate + NH4(+). It catalyses the reaction UTP + NH4(+) + ATP = CTP + ADP + phosphate + 2 H(+). It participates in pyrimidine metabolism; CTP biosynthesis via de novo pathway; CTP from UDP: step 2/2. Its activity is regulated as follows. Allosterically activated by GTP, when glutamine is the substrate; GTP has no effect on the reaction when ammonia is the substrate. The allosteric effector GTP functions by stabilizing the protein conformation that binds the tetrahedral intermediate(s) formed during glutamine hydrolysis. Inhibited by the product CTP, via allosteric rather than competitive inhibition. Catalyzes the ATP-dependent amination of UTP to CTP with either L-glutamine or ammonia as the source of nitrogen. Regulates intracellular CTP levels through interactions with the four ribonucleotide triphosphates. The sequence is that of CTP synthase from Haemophilus ducreyi (strain 35000HP / ATCC 700724).